A 526-amino-acid polypeptide reads, in one-letter code: Outer capsid protein VP5 (526 aa).

Residues 1-42 (MGKVIRSLSRFGKKVGNALTSNTAKKIYSTIGKAAERFAESE) form an involved in membrane permeabilization region.

This sequence belongs to the orbivirus VP5 family.

The protein resides in the virion. In terms of biological role, VP5 protein is one of the two proteins (with VP2) which constitute the virus particle outer capsid. Acts as a membrane permeabilization protein that mediates release of viral particles from endosomal compartments into the cytoplasm. Permeabilization activity is probably negatively regulated by VP2 and is triggered by endosomal degradation of VP2 and exposure to low pH. This chain is Outer capsid protein VP5 (Segment-6), found in Bluetongue virus 1 (isolate Australia) (BTV 1).